A 394-amino-acid chain; its full sequence is GTPase Obg (394 aa).

An Obg domain is found at 5 to 163; sequence SNFVDYVKIY…RMVIMQLKML (159 aa). The tract at residues 26–45 is disordered; the sequence is HFRREKYIPKGGPDGGDGGR. The region spanning 164–330 is the OBG-type G domain; it reads ADVGLVGFPN…LKDTLWKELS (167 aa). GTP is bound by residues 170–177, 195–199, 217–220, 284–287, and 311–313; these read GFPNAGKS, FTTLE, DIPG, TKCD, and SAV. The Mg(2+) site is built by Ser-177 and Thr-197.

This sequence belongs to the TRAFAC class OBG-HflX-like GTPase superfamily. OBG GTPase family. In terms of assembly, monomer. Requires Mg(2+) as cofactor.

It localises to the cytoplasm. An essential GTPase which binds GTP, GDP and possibly (p)ppGpp with moderate affinity, with high nucleotide exchange rates and a fairly low GTP hydrolysis rate. Plays a role in control of the cell cycle, stress response, ribosome biogenesis and in those bacteria that undergo differentiation, in morphogenesis control. The sequence is that of GTPase Obg from Porphyromonas gingivalis (strain ATCC 33277 / DSM 20709 / CIP 103683 / JCM 12257 / NCTC 11834 / 2561).